A 433-amino-acid chain; its full sequence is 26S proteasome regulatory subunit 7 (433 aa).

The tract at residues 1–22 is disordered; it reads MPDYLGADQRKTKEDEKDDKPI. Basic and acidic residues predominate over residues 8–22; that stretch reads DQRKTKEDEKDDKPI. N6-acetyllysine is present on K116. 216 to 223 is an ATP binding site; sequence GPPGTGKT. K422 is modified (N6-acetyllysine).

The protein belongs to the AAA ATPase family. As to quaternary structure, component of the 19S proteasome regulatory particle complex. The 26S proteasome consists of a 20S core particle (CP) and two 19S regulatory subunits (RP). The regulatory particle is made of a lid composed of 9 subunits, a base containing 6 ATPases including PSMC2 and few additional components. Interacts with NDC80/HEC; this interaction is detected only during M phase. Interacts and SQSTM1. Interacts with PAAF1. Directly interacts with TRIM5. Monoubiquitinated by RNF181. Post-translationally, phosphorylated. Dephosphorylated by UBLCP1 which impairs PSMC2 ATPase activity and disrupts 26S proteasome assembly.

It localises to the cytoplasm. The protein resides in the nucleus. Functionally, component of the 26S proteasome, a multiprotein complex involved in the ATP-dependent degradation of ubiquitinated proteins. This complex plays a key role in the maintenance of protein homeostasis by removing misfolded or damaged proteins, which could impair cellular functions, and by removing proteins whose functions are no longer required. Therefore, the proteasome participates in numerous cellular processes, including cell cycle progression, apoptosis, or DNA damage repair. PSMC2 belongs to the heterohexameric ring of AAA (ATPases associated with diverse cellular activities) proteins that unfolds ubiquitinated target proteins that are concurrently translocated into a proteolytic chamber and degraded into peptides. The polypeptide is 26S proteasome regulatory subunit 7 (PSMC2) (Bos taurus (Bovine)).